We begin with the raw amino-acid sequence, 576 residues long: 2-succinyl-5-enolpyruvyl-6-hydroxy-3-cyclohexene-1-carboxylate synthase (576 aa).

This sequence belongs to the TPP enzyme family. MenD subfamily. As to quaternary structure, homodimer. The cofactor is Mg(2+). Requires Mn(2+) as cofactor. Thiamine diphosphate serves as cofactor.

It catalyses the reaction isochorismate + 2-oxoglutarate + H(+) = 5-enolpyruvoyl-6-hydroxy-2-succinyl-cyclohex-3-ene-1-carboxylate + CO2. It participates in quinol/quinone metabolism; 1,4-dihydroxy-2-naphthoate biosynthesis; 1,4-dihydroxy-2-naphthoate from chorismate: step 2/7. The protein operates within quinol/quinone metabolism; menaquinone biosynthesis. Its function is as follows. Catalyzes the thiamine diphosphate-dependent decarboxylation of 2-oxoglutarate and the subsequent addition of the resulting succinic semialdehyde-thiamine pyrophosphate anion to isochorismate to yield 2-succinyl-5-enolpyruvyl-6-hydroxy-3-cyclohexene-1-carboxylate (SEPHCHC). The polypeptide is 2-succinyl-5-enolpyruvyl-6-hydroxy-3-cyclohexene-1-carboxylate synthase (Aliivibrio fischeri (strain ATCC 700601 / ES114) (Vibrio fischeri)).